Consider the following 279-residue polypeptide: Ribosome maturation factor RimP (279 aa).

The tract at residues 197 to 279 (LAEEGEPEEQ…GAPALRPTPK (83 aa)) is disordered. Positions 199–210 (EEGEPEEQEEGG) are enriched in acidic residues.

Belongs to the RimP family.

Its subcellular location is the cytoplasm. Functionally, required for maturation of 30S ribosomal subunits. The sequence is that of Ribosome maturation factor RimP from Methylocella silvestris (strain DSM 15510 / CIP 108128 / LMG 27833 / NCIMB 13906 / BL2).